The primary structure comprises 298 residues: NAD kinase (298 aa).

The Proton acceptor role is filled by aspartate 80. NAD(+)-binding positions include 80–81, 154–155, arginine 182, aspartate 184, 195–200, alanine 219, and glutamine 253; these read DG, ND, and TAYALS.

It belongs to the NAD kinase family. The cofactor is a divalent metal cation.

The protein resides in the cytoplasm. It carries out the reaction NAD(+) + ATP = ADP + NADP(+) + H(+). Functionally, involved in the regulation of the intracellular balance of NAD and NADP, and is a key enzyme in the biosynthesis of NADP. Catalyzes specifically the phosphorylation on 2'-hydroxyl of the adenosine moiety of NAD to yield NADP. This is NAD kinase from Delftia acidovorans (strain DSM 14801 / SPH-1).